A 382-amino-acid chain; its full sequence is Phosphatidylglycerol--prolipoprotein diacylglyceryl transferase (382 aa).

The next 3 helical transmembrane spans lie at 18–38 (IQWY…MFVF), 53–73 (FFIF…SFVI), and 91–111 (LAIQ…FNFF). Arginine 162 is a binding site for a 1,2-diacyl-sn-glycero-3-phospho-(1'-sn-glycerol). The next 4 membrane-spanning stretches (helical) occupy residues 213–233 (IPLF…IYFV), 243–263 (GTIG…LENF), 274–294 (ITTS…CQFI), and 302–322 (FWTY…TTLF).

It belongs to the Lgt family.

Its subcellular location is the cell membrane. It carries out the reaction L-cysteinyl-[prolipoprotein] + a 1,2-diacyl-sn-glycero-3-phospho-(1'-sn-glycerol) = an S-1,2-diacyl-sn-glyceryl-L-cysteinyl-[prolipoprotein] + sn-glycerol 1-phosphate + H(+). It functions in the pathway protein modification; lipoprotein biosynthesis (diacylglyceryl transfer). Its function is as follows. Catalyzes the transfer of the diacylglyceryl group from phosphatidylglycerol to the sulfhydryl group of the N-terminal cysteine of a prolipoprotein, the first step in the formation of mature lipoproteins. The protein is Phosphatidylglycerol--prolipoprotein diacylglyceryl transferase of Mycoplasma genitalium (strain ATCC 33530 / DSM 19775 / NCTC 10195 / G37) (Mycoplasmoides genitalium).